Reading from the N-terminus, the 119-residue chain is Large ribosomal subunit protein uL18 (119 aa).

The protein belongs to the universal ribosomal protein uL18 family. As to quaternary structure, part of the 50S ribosomal subunit; part of the 5S rRNA/L5/L18/L25 subcomplex. Contacts the 5S and 23S rRNAs.

Functionally, this is one of the proteins that bind and probably mediate the attachment of the 5S RNA into the large ribosomal subunit, where it forms part of the central protuberance. The chain is Large ribosomal subunit protein uL18 from Chlorobium phaeovibrioides (strain DSM 265 / 1930) (Prosthecochloris vibrioformis (strain DSM 265)).